A 149-amino-acid chain; its full sequence is Large ribosomal subunit protein bL9 (149 aa).

The protein belongs to the bacterial ribosomal protein bL9 family.

Binds to the 23S rRNA. In Alkaliphilus metalliredigens (strain QYMF), this protein is Large ribosomal subunit protein bL9.